A 255-amino-acid polypeptide reads, in one-letter code: uncharacterized protein (255 aa).

An N-terminal signal peptide occupies residues 1–23 (MKRLNKLVLGISFLFLVISITAG). Cys24 is lipidated: N-palmitoyl cysteine. A lipid anchor (S-diacylglycerol cysteine) is attached at Cys24.

This sequence belongs to the staphylococcal tandem lipoprotein family.

It is found in the cell membrane. This is an uncharacterized protein from Staphylococcus aureus (strain N315).